Here is a 218-residue protein sequence, read N- to C-terminus: Monomethylamine corrinoid protein 2 (218 aa).

The B12-binding N-terminal domain maps to 1–91 (MTNTEIFNKL…ELEKTKVEGE (91 aa)). Residues 94–218 (TGLAITFVAE…AAKVALNVMK (125 aa)) form the B12-binding domain. His-107 lines the methylcob(III)alamin pocket.

Belongs to the methylamine corrinoid protein family. Can form a complex with MtmB.

It participates in one-carbon metabolism; methanogenesis from methylamine. Functionally, acts as a methyl group carrier between MtmB and MtbA. In Methanosarcina mazei (strain ATCC BAA-159 / DSM 3647 / Goe1 / Go1 / JCM 11833 / OCM 88) (Methanosarcina frisia), this protein is Monomethylamine corrinoid protein 2 (mtmC2).